Here is a 532-residue protein sequence, read N- to C-terminus: Cytochrome P450 monooxygenase criE (532 aa).

Residues 18–38 form a helical membrane-spanning segment; the sequence is VSPAALSWAVVAVYIGTFFWL. Residue Cys-441 participates in heme binding.

It belongs to the cytochrome P450 family. Heme is required as a cofactor.

It is found in the membrane. The enzyme catalyses preechinulin + reduced [NADPH--hemoprotein reductase] + O2 = neoechinulin A + oxidized [NADPH--hemoprotein reductase] + 2 H2O + H(+). It participates in secondary metabolite biosynthesis. Its pathway is alkaloid biosynthesis. Cytochrome P450 monooxygenase; part of the gene cluster that mediates the biosynthesis of echinulin family alkaloid. The pathway begins with the biosynthesis of the cyclic dipeptide cyclo-L-Trp-L-Ala (cyclo-TA) by the NRPS criC via condensation of L-alanine and L-tryptophan. The prenyltransferase criA then catalyzes the first prenylation step, a reverse prenylation reaction at C2, to yield preechinulin. Preechinulin is the substrate of the cytochrome P450 monooxygenase criE that catalyzes the formation of the double bond between C10 and C11 to produce neoechulin A. The unique prenyltransferase criF functions as a competitive enzyme with criE for preechinulin metabolization and uses preechinulin for effective regiospecific prenylations. Preechinulin is prenylated by criF at C5 or C7. C7-prenylation leads to accumulation of tardioxopiperazine B without further modification by criF. In contrast, the C5-prenylated tardioxopiperazine A can be prenylated again by criF, predominantly at C7 to form echinulin or less frequently at C4 to give variecolorin L. CriF also accepts neoechilunin A to produce varlecolorin G (prenylation at C5) or isoechinulin A (prenylation at C7). CriF further converts isoechinulin A into dehydroechinulin. Moreover, a yet unidentified enzyme can also convert neoechilunin A into neoechilunin B by introducing a double bond between positions C14 and C17 and thus provides a further substrate to criF for C5 and C7 prenylation. This chain is Cytochrome P450 monooxygenase criE, found in Aspergillus cristatus (Chinese Fuzhuan brick tea-fermentation fungus).